The following is a 507-amino-acid chain: O-fucosyltransferase 30 (507 aa).

Residues 26 to 46 (AIFLCSVSILVVFFIVVFFIT) traverse the membrane as a helical; Signal-anchor for type II membrane protein segment. Asparagine 110, asparagine 146, asparagine 398, and asparagine 410 each carry an N-linked (GlcNAc...) asparagine glycan.

This sequence belongs to the glycosyltransferase GT106 family.

It localises to the membrane. It functions in the pathway glycan metabolism. The polypeptide is O-fucosyltransferase 30 (Arabidopsis thaliana (Mouse-ear cress)).